The sequence spans 377 residues: MKAVGMVVEYNPFHNGHRYHLQQAKKISEADVTVAVMSGNFTQRGEPTIVDKWSRARAAVMNGVDLVIELPLFYAVQPAHRFAGGALSLLNALGVDSIVFGSEHPEWDFARLVKAEEAFNQESFNKYNATYATQFNQQLKEQTGVTLIDPNDILAFAYTKAKINQGYHFELLPIKRQGSNYHDQQIKGKIASASAIRQAISEKGDYRQAVPQVMGDILATIKSIPLWTELYPLLRNQLIQAPVSTLQSTYLMAEGLEYRMKEAAQRSLDFNSFMKFTKTKRYTYAHLLRVCLYTILQITQEEVEKHSKHPYLHVLAFNKQGREYLHEVKKELALPLITKVDQEMRDQLLNLDYRAGKLYQLFTPVEQDLKHPPIIIN.

Residues 7 to 20 (VVEY…HRYH), Gly-101, Asn-151, and Arg-176 contribute to the ATP site.

Belongs to the TmcAL family.

Its subcellular location is the cytoplasm. It catalyses the reaction cytidine(34) in elongator tRNA(Met) + acetate + ATP = N(4)-acetylcytidine(34) in elongator tRNA(Met) + AMP + diphosphate. Catalyzes the formation of N(4)-acetylcytidine (ac(4)C) at the wobble position of elongator tRNA(Met), using acetate and ATP as substrates. First activates an acetate ion to form acetyladenylate (Ac-AMP) and then transfers the acetyl group to tRNA to form ac(4)C34. The polypeptide is tRNA(Met) cytidine acetate ligase (Limosilactobacillus reuteri (strain DSM 20016) (Lactobacillus reuteri)).